The primary structure comprises 198 residues: Fimbriae W protein (198 aa).

The HTH luxR-type domain occupies histidine 127–leucine 192.

It is found in the fimbrium. This chain is Fimbriae W protein (fimW), found in Salmonella typhimurium (strain LT2 / SGSC1412 / ATCC 700720).